Consider the following 248-residue polypeptide: ATP synthase subunit a, chloroplastic (248 aa).

Helical transmembrane passes span 37–57, 96–116, 135–155, 200–220, and 221–241; these read AQVL…AVLA, VPFI…GALF, INTT…AGLH, LVVA…MMFL, and GLFT…AYIG.

It belongs to the ATPase A chain family. F-type ATPases have 2 components, CF(1) - the catalytic core - and CF(0) - the membrane proton channel. CF(1) has five subunits: alpha(3), beta(3), gamma(1), delta(1), epsilon(1). CF(0) has four main subunits: a, b, b' and c.

It is found in the plastid. The protein localises to the chloroplast thylakoid membrane. In terms of biological role, key component of the proton channel; it plays a direct role in the translocation of protons across the membrane. This chain is ATP synthase subunit a, chloroplastic, found in Marchantia polymorpha (Common liverwort).